Consider the following 261-residue polypeptide: Type III pantothenate kinase (261 aa).

ATP is bound at residue 6–13; it reads DAGNTNVV. 108-111 contributes to the substrate binding site; that stretch reads GADR. Asp-110 serves as the catalytic Proton acceptor. Asp-130 contributes to the K(+) binding site. Thr-133 provides a ligand contact to ATP. Thr-185 contributes to the substrate binding site.

Belongs to the type III pantothenate kinase family. Homodimer. It depends on NH4(+) as a cofactor. K(+) serves as cofactor.

The protein localises to the cytoplasm. The catalysed reaction is (R)-pantothenate + ATP = (R)-4'-phosphopantothenate + ADP + H(+). It participates in cofactor biosynthesis; coenzyme A biosynthesis; CoA from (R)-pantothenate: step 1/5. Its function is as follows. Catalyzes the phosphorylation of pantothenate (Pan), the first step in CoA biosynthesis. In Rhodospirillum centenum (strain ATCC 51521 / SW), this protein is Type III pantothenate kinase.